Reading from the N-terminus, the 398-residue chain is Odorant receptor 24a (398 aa).

Residues 1-14 (MLPRFLTASYPMER) are Cytoplasmic-facing. Residues 15-31 (HYFMVPKFALSLIGFYP) form a helical membrane-spanning segment. The Extracellular portion of the chain corresponds to 32 to 46 (EQKRTVLVKLWSFFN). The helical transmembrane segment at 47-67 (FFILTYGCYAEAYYGIHYIPI) threads the bilayer. The Cytoplasmic portion of the chain corresponds to 68-74 (NIATALD). A helical transmembrane segment spans residues 75 to 95 (ALCPVASSILSLVKMVAIWWY). Residues 96–124 (QDELRSLIERVRFLTEQQKSKRKLGYKKR) are Extracellular-facing. Residues 125-145 (FYTLATQLTFLLLCCGFCTST) form a helical membrane-spanning segment. The Cytoplasmic segment spans residues 146 to 199 (SYSVRHLIDNILRRTHGKDWIYETPFKMMFPDLLLRLPLYPITYILVHWHGYIT). Residues 200–220 (VVCFVGADGFFLGFCLYFTVL) form a helical membrane-spanning segment. The Extracellular segment spans residues 221–269 (LLCLQDDVCDLLEVENIEKSPSEAEEARIVREMEKLVDRHNEVAELTER). The chain crosses the membrane as a helical span at residues 270 to 290 (LSGVMVEITLAHFVTSSLIIG). Topologically, residues 291 to 295 (TSVVD) are cytoplasmic. A helical membrane pass occupies residues 296–316 (ILLFSGLGIIVYVVYTCAVGV). The Extracellular segment spans residues 317–398 (EIFLYCLGGS…SLIALAKSVI (82 aa)).

This sequence belongs to the insect chemoreceptor superfamily. Heteromeric odorant receptor channel (TC 1.A.69) family. Or1a subfamily. As to quaternary structure, interacts with Orco. Complexes exist early in the endomembrane system in olfactory sensory neurons (OSNs), coupling these complexes to the conserved ciliary trafficking pathway. As to expression, not expressed in either the antenna or maxillary palp.

Its subcellular location is the cell membrane. Its function is as follows. Odorant receptor which mediates acceptance or avoidance behavior, depending on its substrates. The odorant receptor repertoire encodes a large collection of odor stimuli that vary widely in identity, intensity, and duration. May form a complex with Orco to form odorant-sensing units, providing sensitive and prolonged odorant signaling and calcium permeability. Involved in the behavioral responses to pentanol, hexanol, octanol, nonanol, propyl acetate, butyl acetate, isoamyl acetate, methyl caproate, anisole, heptanal, 2-heptanone, r-carvone, and nonanoic acid. Also responds to pyrazines. In Drosophila melanogaster (Fruit fly), this protein is Odorant receptor 24a (Or24a).